The sequence spans 277 residues: Large ribosomal subunit protein uL2 (277 aa).

Disordered regions lie at residues 1-55 (MGIR…RHQG) and 217-277 (KRPS…KKKR). Residues 37–55 (LHSKGGRNGHGRITARHQG) are compositionally biased toward basic residues.

Belongs to the universal ribosomal protein uL2 family. Part of the 50S ribosomal subunit. Forms a bridge to the 30S subunit in the 70S ribosome.

In terms of biological role, one of the primary rRNA binding proteins. Required for association of the 30S and 50S subunits to form the 70S ribosome, for tRNA binding and peptide bond formation. It has been suggested to have peptidyltransferase activity; this is somewhat controversial. Makes several contacts with the 16S rRNA in the 70S ribosome. This is Large ribosomal subunit protein uL2 from Thermobifida fusca (strain YX).